Consider the following 209-residue polypeptide: N-(5'-phosphoribosyl)anthranilate isomerase (209 aa).

The protein belongs to the TrpF family.

It catalyses the reaction N-(5-phospho-beta-D-ribosyl)anthranilate = 1-(2-carboxyphenylamino)-1-deoxy-D-ribulose 5-phosphate. Its pathway is amino-acid biosynthesis; L-tryptophan biosynthesis; L-tryptophan from chorismate: step 3/5. The sequence is that of N-(5'-phosphoribosyl)anthranilate isomerase from Pyrobaculum islandicum (strain DSM 4184 / JCM 9189 / GEO3).